The sequence spans 283 residues: tRNA pseudouridine synthase A (283 aa).

Asp-73 (nucleophile) is an active-site residue. The segment at 120 to 124 (FHARF) is RNA binding. Tyr-131 is a substrate binding site. Positions 181 to 185 (QCQSR) are interaction with tRNA.

It belongs to the tRNA pseudouridine synthase TruA family. In terms of assembly, homodimer.

The enzyme catalyses uridine(38/39/40) in tRNA = pseudouridine(38/39/40) in tRNA. Its function is as follows. Formation of pseudouridine at positions 38, 39 and 40 in the anticodon stem and loop of transfer RNAs. The polypeptide is tRNA pseudouridine synthase A (Pectobacterium atrosepticum (strain SCRI 1043 / ATCC BAA-672) (Erwinia carotovora subsp. atroseptica)).